The sequence spans 429 residues: Serine--tRNA ligase (429 aa).

229–231 contacts L-serine; sequence TAE. 260–262 lines the ATP pocket; sequence RSE. An L-serine-binding site is contributed by glutamate 283. Position 347-350 (347-350) interacts with ATP; sequence EISS. Serine 383 contacts L-serine.

This sequence belongs to the class-II aminoacyl-tRNA synthetase family. Type-1 seryl-tRNA synthetase subfamily. As to quaternary structure, homodimer. The tRNA molecule binds across the dimer.

Its subcellular location is the cytoplasm. The catalysed reaction is tRNA(Ser) + L-serine + ATP = L-seryl-tRNA(Ser) + AMP + diphosphate + H(+). The enzyme catalyses tRNA(Sec) + L-serine + ATP = L-seryl-tRNA(Sec) + AMP + diphosphate + H(+). The protein operates within aminoacyl-tRNA biosynthesis; selenocysteinyl-tRNA(Sec) biosynthesis; L-seryl-tRNA(Sec) from L-serine and tRNA(Sec): step 1/1. Its function is as follows. Catalyzes the attachment of serine to tRNA(Ser). Is also able to aminoacylate tRNA(Sec) with serine, to form the misacylated tRNA L-seryl-tRNA(Sec), which will be further converted into selenocysteinyl-tRNA(Sec). In Orientia tsutsugamushi (strain Boryong) (Rickettsia tsutsugamushi), this protein is Serine--tRNA ligase.